Reading from the N-terminus, the 280-residue chain is Ribosomal RNA-processing protein 7 homolog A (280 aa).

Basic residues predominate over residues 1-10; it reads MVSRRKKRKA. Positions 1–24 are disordered; sequence MVSRRKKRKAGGHEESIPSPPGYS. Positions 59–159 constitute an RRM domain; the sequence is RTLFILNVPP…SGIHKWISDY (101 aa). Position 99 is a phosphoserine (Ser99).

It belongs to the RRP7 family. Part of the small subunit (SSU) processome, composed of more than 70 proteins and the RNA chaperone small nucleolar RNA (snoRNA) U3. Interacts with NOL6; required for NOL6 localization to nucleolus.

It localises to the nucleus. The protein resides in the nucleolus. The protein localises to the cell projection. Its subcellular location is the cilium. It is found in the cytoplasm. It localises to the cytoskeleton. The protein resides in the microtubule organizing center. The protein localises to the centrosome. In terms of biological role, nucleolar protein that is involved in ribosomal RNA (rRNA) processing. Also plays a role in primary cilia resorption, and cell cycle progression in neurogenesis and neocortex development. Part of the small subunit (SSU) processome, first precursor of the small eukaryotic ribosomal subunit. During the assembly of the SSU processome in the nucleolus, many ribosome biogenesis factors, an RNA chaperone and ribosomal proteins associate with the nascent pre-rRNA and work in concert to generate RNA folding, modifications, rearrangements and cleavage as well as targeted degradation of pre-ribosomal RNA by the RNA exosome. The polypeptide is Ribosomal RNA-processing protein 7 homolog A (Rrp7a) (Mus musculus (Mouse)).